The following is a 407-amino-acid chain: MLRIGLTGGIGAGKSLLSTTFSQCGGIVVDGDVLAREVVQPGTEGLASLVDAFGRDILLADGALDRQALAAKAFRDDESRGVLNGIVHPLVARRRSEIIAAVSGDAVVVEDIPLLVESGMAPLFPLVVVVHADVELRVRRLVEQRGMAEADARARIAAQASDQQRRAVADVWLDNSGSPEDLVRRARDVWNTRVQPFAHNLAQRQIARAPARLVPADPSWPDQARRIVNRLKIACGHKALRVDHIGSTAVSGFPDFLAKDVIDIQVTVESLDVADELAEPLLAAGYPRLEHITQDTEKTDARSTVGRYDHTDSAALWHKRVHASADPGRPTNVHLRVHGWPNQQFALLFVDWLAANPGAREDYLTVKCDADRRADGELARYVTAKEPWFLDAYQRAWEWADAVHWRP.

The region spanning 3 to 204 (RIGLTGGIGA…QPFAHNLAQR (202 aa)) is the DPCK domain. 11–16 (GAGKSL) provides a ligand contact to ATP. A UPF0157 region spans residues 196–407 (PFAHNLAQRQ…EWADAVHWRP (212 aa)).

It in the N-terminal section; belongs to the CoaE family. The protein in the C-terminal section; belongs to the UPF0157 (GrpB) family.

The protein resides in the cytoplasm. It carries out the reaction 3'-dephospho-CoA + ATP = ADP + CoA + H(+). The protein operates within cofactor biosynthesis; coenzyme A biosynthesis; CoA from (R)-pantothenate: step 5/5. Functionally, catalyzes the phosphorylation of the 3'-hydroxyl group of dephosphocoenzyme A to form coenzyme A. This Mycobacterium bovis (strain ATCC BAA-935 / AF2122/97) protein is Dephospho-CoA kinase.